Here is a 270-residue protein sequence, read N- to C-terminus: 4-hydroxy-tetrahydrodipicolinate reductase (270 aa).

Residues 11–16 (GAGGRM) and Glu37 contribute to the NAD(+) site. An NADP(+)-binding site is contributed by Arg38. NAD(+) is bound by residues 101–103 (GTT) and 125–128 (APNM). His158 (proton donor/acceptor) is an active-site residue. A (S)-2,3,4,5-tetrahydrodipicolinate-binding site is contributed by His159. Lys162 acts as the Proton donor in catalysis. Position 168 to 169 (168 to 169 (GT)) interacts with (S)-2,3,4,5-tetrahydrodipicolinate.

This sequence belongs to the DapB family.

Its subcellular location is the cytoplasm. It catalyses the reaction (S)-2,3,4,5-tetrahydrodipicolinate + NAD(+) + H2O = (2S,4S)-4-hydroxy-2,3,4,5-tetrahydrodipicolinate + NADH + H(+). The catalysed reaction is (S)-2,3,4,5-tetrahydrodipicolinate + NADP(+) + H2O = (2S,4S)-4-hydroxy-2,3,4,5-tetrahydrodipicolinate + NADPH + H(+). It functions in the pathway amino-acid biosynthesis; L-lysine biosynthesis via DAP pathway; (S)-tetrahydrodipicolinate from L-aspartate: step 4/4. Functionally, catalyzes the conversion of 4-hydroxy-tetrahydrodipicolinate (HTPA) to tetrahydrodipicolinate. This chain is 4-hydroxy-tetrahydrodipicolinate reductase, found in Shewanella sp. (strain MR-4).